The following is an 83-amino-acid chain: Small ribosomal subunit protein uS17 (83 aa).

Belongs to the universal ribosomal protein uS17 family. In terms of assembly, part of the 30S ribosomal subunit.

Its function is as follows. One of the primary rRNA binding proteins, it binds specifically to the 5'-end of 16S ribosomal RNA. This is Small ribosomal subunit protein uS17 from Aliarcobacter butzleri (strain RM4018) (Arcobacter butzleri).